A 548-amino-acid polypeptide reads, in one-letter code: Probable malate:quinone oxidoreductase (548 aa).

A disordered region spans residues 520–548; the sequence is YDRPQAADSTPKPQLKPQPVQKEVADIAL. Residues 530–541 show a composition bias toward low complexity; that stretch reads PKPQLKPQPVQK.

The protein belongs to the MQO family. Requires FAD as cofactor.

The catalysed reaction is (S)-malate + a quinone = a quinol + oxaloacetate. It functions in the pathway carbohydrate metabolism; tricarboxylic acid cycle; oxaloacetate from (S)-malate (quinone route): step 1/1. The polypeptide is Probable malate:quinone oxidoreductase (Shigella dysenteriae serotype 1 (strain Sd197)).